The sequence spans 235 residues: Enolase-phosphatase E1 (235 aa).

The protein belongs to the HAD-like hydrolase superfamily. MasA/MtnC family. As to quaternary structure, monomer. Mg(2+) is required as a cofactor.

The catalysed reaction is 5-methylsulfanyl-2,3-dioxopentyl phosphate + H2O = 1,2-dihydroxy-5-(methylsulfanyl)pent-1-en-3-one + phosphate. It participates in amino-acid biosynthesis; L-methionine biosynthesis via salvage pathway; L-methionine from S-methyl-5-thio-alpha-D-ribose 1-phosphate: step 3/6. The protein operates within amino-acid biosynthesis; L-methionine biosynthesis via salvage pathway; L-methionine from S-methyl-5-thio-alpha-D-ribose 1-phosphate: step 4/6. Its function is as follows. Bifunctional enzyme that catalyzes the enolization of 2,3-diketo-5-methylthiopentyl-1-phosphate (DK-MTP-1-P) into the intermediate 2-hydroxy-3-keto-5-methylthiopentenyl-1-phosphate (HK-MTPenyl-1-P), which is then dephosphorylated to form the acireductone 1,2-dihydroxy-3-keto-5-methylthiopentene (DHK-MTPene). In Gluconacetobacter diazotrophicus (strain ATCC 49037 / DSM 5601 / CCUG 37298 / CIP 103539 / LMG 7603 / PAl5), this protein is Enolase-phosphatase E1.